The primary structure comprises 189 residues: Small ribosomal subunit protein uS7 (189 aa).

Belongs to the universal ribosomal protein uS7 family. As to quaternary structure, part of the 30S ribosomal subunit.

In terms of biological role, one of the primary rRNA binding proteins, it binds directly to 16S rRNA where it nucleates assembly of the head domain of the 30S subunit. Is located at the subunit interface close to the decoding center. In Methanosarcina acetivorans (strain ATCC 35395 / DSM 2834 / JCM 12185 / C2A), this protein is Small ribosomal subunit protein uS7.